A 328-amino-acid chain; its full sequence is Phosphate acyltransferase (328 aa).

The protein belongs to the PlsX family. As to quaternary structure, homodimer. Probably interacts with PlsY.

Its subcellular location is the cytoplasm. It catalyses the reaction a fatty acyl-[ACP] + phosphate = an acyl phosphate + holo-[ACP]. It participates in lipid metabolism; phospholipid metabolism. Catalyzes the reversible formation of acyl-phosphate (acyl-PO(4)) from acyl-[acyl-carrier-protein] (acyl-ACP). This enzyme utilizes acyl-ACP as fatty acyl donor, but not acyl-CoA. This is Phosphate acyltransferase from Campylobacter jejuni subsp. jejuni serotype O:6 (strain 81116 / NCTC 11828).